The sequence spans 342 residues: MNTADFDFHLPEELIAQTPLEKRDASKLLIVNRETGEMQDKHFHSIIDMLEPGDALVMNDTRVLPARLYGQKVETGSHVELLLLKNTSGDEWEVLAKPAKRLKVGTRISFGDGRLSAVVTEELTHGGRIVRFEYQRIFLEVLESLGEMPLPPYIHEKLDDRERYQTVYAKESGSAAAPTAGLHFTKELLAEIQAKGVHLVYLTLHVGLGTFRPVSVDNLDEHEMHSEFYQLSEEAAATLRSVKENGGRVIAVGTTSIRTLETIGSKFDGQIQADSGWTNIFIKPGYEWKVVDAFSTNFHLPKSTLVMLVSAFAGRELVLDAYHHSIQEHYRFFSFGDAMFIY.

Belongs to the QueA family. Monomer.

The protein localises to the cytoplasm. It catalyses the reaction 7-aminomethyl-7-carbaguanosine(34) in tRNA + S-adenosyl-L-methionine = epoxyqueuosine(34) in tRNA + adenine + L-methionine + 2 H(+). Its pathway is tRNA modification; tRNA-queuosine biosynthesis. Its function is as follows. Transfers and isomerizes the ribose moiety from AdoMet to the 7-aminomethyl group of 7-deazaguanine (preQ1-tRNA) to give epoxyqueuosine (oQ-tRNA). This Streptococcus pneumoniae (strain ATCC BAA-255 / R6) protein is S-adenosylmethionine:tRNA ribosyltransferase-isomerase.